The sequence spans 609 residues: MRPLSRSISRLAAVAMGDRKADLIIQNCSLVSVYTGEVIEGTEIAVSGDRIAYVGPDASHARGAGTVIHNAQGRYAAPGFADPHIHVDQFVTPAELAAQSVLHGTTSLFSDPIDMVGVAGYRGFRTLMNMSKDLPARFFHVVPGGLPVDGRFSHSNTLSPEEERSAIGLPDVLGMGEVFSWTKVTSRDPGTMRSIGTMLDGGCIINGHTAGASGKKLSAYVSAGILSCHEPVNAEQAEERLRLGMWVMMREGSIRRDLAEILPPMLKKEAGLDRLMFCTDGIDPVDMGEKGHIDHCVREAVRLGADPVRAIAMASRNCFDYYNMARDLGGISPGRIADIQMLYDLESFRPEDVFVGGNRMVSGGKLVSRQHPVKAPSWTRRTIRLGRLTAADFAVHSRKKTEQVNTITMKTEIITEQGSAELSVKEGNVEPSRDSDVWKVAAFDRLSGNGGRTVGFLENFGADIGALASSWSFHENDLVVLGSSEIEMAKAANAVMDKGGGIAVVQKGRVSAMLPLQICGIISSDPFGKVSEGLSKLTSVMTDAGCTFQRPHLVPVFLPFLALPSVRILYSGMVDVRRRSYIPVIAGARTASQRPKTLRNIKKGPKSVR.

The protein belongs to the metallo-dependent hydrolases superfamily. Adenine deaminase family. The cofactor is Mn(2+).

The enzyme catalyses adenine + H2O + H(+) = hypoxanthine + NH4(+). This is Adenine deaminase from Cenarchaeum symbiosum (strain A).